A 202-amino-acid chain; its full sequence is Large ribosomal subunit protein uL4 (202 aa).

Residues 47–67 (KTKAEVSGGGVKPWKQKGTGR) form a disordered region.

It belongs to the universal ribosomal protein uL4 family. As to quaternary structure, part of the 50S ribosomal subunit.

One of the primary rRNA binding proteins, this protein initially binds near the 5'-end of the 23S rRNA. It is important during the early stages of 50S assembly. It makes multiple contacts with different domains of the 23S rRNA in the assembled 50S subunit and ribosome. In terms of biological role, forms part of the polypeptide exit tunnel. The sequence is that of Large ribosomal subunit protein uL4 from Dichelobacter nodosus (strain VCS1703A).